A 312-amino-acid chain; its full sequence is Glyoxylate/hydroxypyruvate reductase A (312 aa).

The active site involves Arg-227. His-275 acts as the Proton donor in catalysis.

It belongs to the D-isomer specific 2-hydroxyacid dehydrogenase family. GhrA subfamily.

Its subcellular location is the cytoplasm. The enzyme catalyses glycolate + NADP(+) = glyoxylate + NADPH + H(+). It carries out the reaction (R)-glycerate + NAD(+) = 3-hydroxypyruvate + NADH + H(+). It catalyses the reaction (R)-glycerate + NADP(+) = 3-hydroxypyruvate + NADPH + H(+). Functionally, catalyzes the NADPH-dependent reduction of glyoxylate and hydroxypyruvate into glycolate and glycerate, respectively. The polypeptide is Glyoxylate/hydroxypyruvate reductase A (Salmonella choleraesuis (strain SC-B67)).